Consider the following 408-residue polypeptide: Triose phosphate/phosphate translocator, chloroplastic (408 aa).

Residues 1–82 (MESRVLSSGA…VKRDVLKPCT (82 aa)) constitute a chloroplast transit peptide. At 83-102 (ATASDSAGDAAPVGFFAKYP) the chain is on the chloroplast intermembrane side. The chain crosses the membrane as a helical span at residues 103–123 (FLVTGFFFFMWYFLNVIFNIL). The Lumenal portion of the chain corresponds to 124-135 (NKKIYNYFPYPY). Residues 136–156 (FVSAIHLAVGVVYCLGGWAVG) traverse the membrane as a helical segment. The Chloroplast intermembrane portion of the chain corresponds to 157–213 (LPKRAPMDSNLLKLLIPVAFCHALGHVTSNVSFAAVAVSFTHTIKSLEPFFNAAASQ). A helical transmembrane segment spans residues 214–234 (FILGQSIPITLWLSLAPVVIG). The Lumenal segment spans residues 235-278 (VSMASLTELSFNWLGFISAMISNISFTYRSIYSKKAMTDMDSTN). A helical membrane pass occupies residues 279 to 298 (LYAYISIISLLFCIPPAIIL). The Chloroplast intermembrane segment spans residues 299–376 (EGPQLLKHGF…IVFGNKISTQ (78 aa)). A helical membrane pass occupies residues 377–397 (TAIGTSIAIAGVAVYSLIKAK). The Lumenal segment spans residues 398-408 (IEEEKRGLKSA).

This sequence belongs to the TPT transporter family. TPT (TC 2.A.7.9) subfamily. In terms of assembly, homodimer.

It localises to the plastid. Its subcellular location is the chloroplast membrane. Mediates the export of fixed carbons from the chloroplasts into the cytosol in the form of triose phosphates. The sequence is that of Triose phosphate/phosphate translocator, chloroplastic (TPT) from Flaveria pringlei.